Consider the following 179-residue polypeptide: Large ribosomal subunit protein uL5 (179 aa).

It belongs to the universal ribosomal protein uL5 family. As to quaternary structure, part of the 50S ribosomal subunit; part of the 5S rRNA/L5/L18/L25 subcomplex. Contacts the 5S rRNA and the P site tRNA. Forms a bridge to the 30S subunit in the 70S ribosome.

Functionally, this is one of the proteins that bind and probably mediate the attachment of the 5S RNA into the large ribosomal subunit, where it forms part of the central protuberance. In the 70S ribosome it contacts protein S13 of the 30S subunit (bridge B1b), connecting the 2 subunits; this bridge is implicated in subunit movement. Contacts the P site tRNA; the 5S rRNA and some of its associated proteins might help stabilize positioning of ribosome-bound tRNAs. This chain is Large ribosomal subunit protein uL5, found in Pseudomonas entomophila (strain L48).